The chain runs to 339 residues: Zinc metalloprotease MJ0392 (339 aa).

Helical transmembrane passes span 10 to 30 and 33 to 53; these read IMGI…VIIG and IMNN…SVVL. His-54 contributes to the Zn(2+) binding site. Residue Glu-55 is part of the active site. Residue His-58 coordinates Zn(2+). The next 2 helical transmembrane spans lie at 96 to 116 and 125 to 145; these read IAGP…SQFF and LLYT…IPAF. Residue Asp-148 coordinates Zn(2+). A run of 2 helical transmembrane segments spans residues 180–200 and 251–271; these read IMLL…SLFV and YFGY…IGNI. CBS domains are found at residues 226 to 281 and 281 to 335; these read MTPN…VRDY and YMEK…ELKE.

This sequence belongs to the peptidase M50B family. As to quaternary structure, monomer. The cofactor is Zn(2+).

Its subcellular location is the cell membrane. Inhibited by 1,10-phenanthroline. A site-2 regulated intramembrane protease (S2P) that cleaves type-2 transmembrane proteins within their membrane-spanning domains; its endogenous substrate is unknown. Regulated intramembrane proteolysis (RIP) occurs when an extracytoplasmic signal triggers a concerted proteolytic cascade to transmit information and elicit cellular responses. A membrane-spanning regulatory substrate protein is first cut extracytoplasmically (site-1 protease, S1P), then within the membrane itself (site-2 protease, S2P, this enzyme), while cytoplasmic proteases finish degrading the regulatory protein, liberating the effector protein. Possible signals, S1P and substrates are unknown in this organism. The chain is Zinc metalloprotease MJ0392 from Methanocaldococcus jannaschii (strain ATCC 43067 / DSM 2661 / JAL-1 / JCM 10045 / NBRC 100440) (Methanococcus jannaschii).